A 464-amino-acid polypeptide reads, in one-letter code: tRNA modification GTPase MnmE (464 aa).

(6S)-5-formyl-5,6,7,8-tetrahydrofolate-binding residues include Arg27, Glu90, and Lys129. In terms of domain architecture, TrmE-type G spans 222 to 384 (GITLVLAGSV…LYDKIRTLIS (163 aa)). GTP contacts are provided by residues 232 to 237 (NAGKSS), 251 to 257 (SSYPGTT), and 276 to 279 (DTAG). Positions 236 and 257 each coordinate Mg(2+). Lys464 provides a ligand contact to (6S)-5-formyl-5,6,7,8-tetrahydrofolate.

It belongs to the TRAFAC class TrmE-Era-EngA-EngB-Septin-like GTPase superfamily. TrmE GTPase family. As to quaternary structure, homodimer. Heterotetramer of two MnmE and two MnmG subunits. K(+) is required as a cofactor.

It localises to the cytoplasm. In terms of biological role, exhibits a very high intrinsic GTPase hydrolysis rate. Involved in the addition of a carboxymethylaminomethyl (cmnm) group at the wobble position (U34) of certain tRNAs, forming tRNA-cmnm(5)s(2)U34. This chain is tRNA modification GTPase MnmE, found in Borreliella afzelii (strain PKo) (Borrelia afzelii).